Here is a 25-residue protein sequence, read N- to C-terminus: ITAGFISSSANTVYVKKGDVMVFPR.

Belongs to the germin family.

This chain is Germin-like protein, found in Populus euphratica (Euphrates poplar).